The primary structure comprises 467 residues: NADH-ubiquinone oxidoreductase chain 4 (467 aa).

Transmembrane regions (helical) follow at residues serine 21–tyrosine 40, methionine 54–tryptophan 74, serine 79–cysteine 99, phenylalanine 105–alanine 125, valine 135–valine 155, leucine 168–valine 188, proline 207–isoleucine 227, valine 239–isoleucine 259, leucine 266–leucine 286, leucine 297–methionine 317, phenylalanine 330–cysteine 350, leucine 367–leucine 387, and valine 420–methionine 440.

The protein belongs to the complex I subunit 4 family.

The protein localises to the mitochondrion membrane. The catalysed reaction is a ubiquinone + NADH + 5 H(+)(in) = a ubiquinol + NAD(+) + 4 H(+)(out). Core subunit of the mitochondrial membrane respiratory chain NADH dehydrogenase (Complex I) that is believed to belong to the minimal assembly required for catalysis. Complex I functions in the transfer of electrons from NADH to the respiratory chain. The immediate electron acceptor for the enzyme is believed to be ubiquinone. The polypeptide is NADH-ubiquinone oxidoreductase chain 4 (ND4) (Debaryomyces hansenii (strain ATCC 36239 / CBS 767 / BCRC 21394 / JCM 1990 / NBRC 0083 / IGC 2968) (Yeast)).